We begin with the raw amino-acid sequence, 336 residues long: Biotin synthase (336 aa).

Positions 48 to 277 (VFGDEVEFCS…QAELRLCGGR (230 aa)) constitute a Radical SAM core domain. [4Fe-4S] cluster contacts are provided by Cys66, Cys70, and Cys73. Residues Cys110, Cys142, Cys202, and Arg272 each coordinate [2Fe-2S] cluster.

It belongs to the radical SAM superfamily. Biotin synthase family. As to quaternary structure, homodimer. Requires [4Fe-4S] cluster as cofactor. The cofactor is [2Fe-2S] cluster.

The catalysed reaction is (4R,5S)-dethiobiotin + (sulfur carrier)-SH + 2 reduced [2Fe-2S]-[ferredoxin] + 2 S-adenosyl-L-methionine = (sulfur carrier)-H + biotin + 2 5'-deoxyadenosine + 2 L-methionine + 2 oxidized [2Fe-2S]-[ferredoxin]. It functions in the pathway cofactor biosynthesis; biotin biosynthesis; biotin from 7,8-diaminononanoate: step 2/2. Functionally, catalyzes the conversion of dethiobiotin (DTB) to biotin by the insertion of a sulfur atom into dethiobiotin via a radical-based mechanism. This chain is Biotin synthase, found in Persephonella marina (strain DSM 14350 / EX-H1).